The chain runs to 466 residues: Anthocyanidin 3-O-glucosyltransferase 1 (466 aa).

Histidine 22 acts as the Proton acceptor in catalysis. Histidine 22 and glutamine 87 together coordinate an anthocyanidin. Aspartate 122 (charge relay) is an active-site residue. Threonine 145 provides a ligand contact to UDP-alpha-D-glucose. Histidine 154 provides a ligand contact to an anthocyanidin. UDP-alpha-D-glucose is bound by residues alanine 346, glutamine 348, histidine 363, tryptophan 366, asparagine 367, serine 368, and glutamate 371. Residue glycine 386 coordinates an anthocyanidin. Positions 387 and 388 each coordinate UDP-alpha-D-glucose.

Belongs to the UDP-glycosyltransferase family. Highest expression detected in receptacles and achenes, with very low levels detected in runners, leaves, flowers, crowns and green receptacles.

The enzyme catalyses an anthocyanidin + UDP-alpha-D-glucose + H(+) = an anthocyanidin 3-O-beta-D-glucoside + UDP. It carries out the reaction cyanidin + UDP-alpha-D-glucose = cyanidin 3-O-beta-D-glucoside + UDP + H(+). The catalysed reaction is pelargonidin + UDP-alpha-D-glucose = pelargonidin 3-O-beta-D-glucoside + UDP. It catalyses the reaction peonidin + UDP-alpha-D-glucose = peonidin 3-O-beta-D-glucoside + UDP. The enzyme catalyses delphinidin + UDP-alpha-D-glucose = delphinidin 3-O-beta-D-glucoside + UDP. It carries out the reaction a flavonol + UDP-alpha-D-glucose = a flavonol 3-O-beta-D-glucoside + UDP + H(+). The protein operates within pigment biosynthesis; anthocyanin biosynthesis. Functionally, in the presence of other necessary color factors, this glycosylation reaction allows the accumulation of anthocyanin pigments. Uses UDP-Glc as a sugar donor, but not UDP-Gal or UDP-GlcUA. Anthocyanidins are the preferred substrates in vivo, but flavonols can also be glucosylated in vitro. This is Anthocyanidin 3-O-glucosyltransferase 1 from Fragaria ananassa (Strawberry).